We begin with the raw amino-acid sequence, 330 residues long: tRNA uridine(34) hydroxylase (330 aa).

The Rhodanese domain occupies 123–217 (SDPEVILVDT…YLEEVKQEES (95 aa)). The active-site Cysteine persulfide intermediate is the Cys177.

The protein belongs to the TrhO family.

It catalyses the reaction uridine(34) in tRNA + AH2 + O2 = 5-hydroxyuridine(34) in tRNA + A + H2O. In terms of biological role, catalyzes oxygen-dependent 5-hydroxyuridine (ho5U) modification at position 34 in tRNAs. The protein is tRNA uridine(34) hydroxylase of Shewanella sp. (strain MR-4).